The primary structure comprises 270 residues: MPEIIIVKNEAEAGEIYGRCVADLIKAKPDAVLGLATGSSPLAAYQALAKIVKDEAIDVSGVRGFALDEYIGLPLTHPESYHATIHRTVVEPLGLDPAKVHVPGDVLNGTPLEDGDKIALAGPAYDRAIEAAGGIDVQILGIGTDGHVGFNEPGSSLASGTRVKTLAEQTRIDNARFFDNDINQVPTHCITQGIGTIMKARHLVLLAFGAGKAEAIEETVEGGVSAFCPASALQMHPHATIIVDEEAASRLRHKDYYRYAYTHKPAWQGI.

The active-site Proton acceptor; for enolization step is D68. Residue D145 is the For ring-opening step of the active site. H147 functions as the Proton acceptor; for ring-opening step in the catalytic mechanism. Residue E152 is the For ring-opening step of the active site.

The protein belongs to the glucosamine/galactosamine-6-phosphate isomerase family. NagB subfamily.

It catalyses the reaction alpha-D-glucosamine 6-phosphate + H2O = beta-D-fructose 6-phosphate + NH4(+). It functions in the pathway amino-sugar metabolism; N-acetylneuraminate degradation; D-fructose 6-phosphate from N-acetylneuraminate: step 5/5. Catalyzes the reversible isomerization-deamination of glucosamine 6-phosphate (GlcN6P) to form fructose 6-phosphate (Fru6P) and ammonium ion. The sequence is that of Glucosamine-6-phosphate deaminase from Bifidobacterium longum (strain DJO10A).